The primary structure comprises 267 residues: 2-keto-3-deoxy-L-rhamnonate aldolase (267 aa).

The active-site Proton acceptor is the His-49. A substrate-binding site is contributed by Gln-151. A Mg(2+)-binding site is contributed by Glu-153. Substrate is bound by residues Ala-178 and Asp-179. Asp-179 provides a ligand contact to Mg(2+).

Belongs to the HpcH/HpaI aldolase family. KDR aldolase subfamily. In terms of assembly, homohexamer. Mg(2+) serves as cofactor.

It catalyses the reaction 2-dehydro-3-deoxy-L-rhamnonate = (S)-lactaldehyde + pyruvate. Its function is as follows. Catalyzes the reversible retro-aldol cleavage of 2-keto-3-deoxy-L-rhamnonate (KDR) to pyruvate and lactaldehyde. The protein is 2-keto-3-deoxy-L-rhamnonate aldolase of Salmonella dublin (strain CT_02021853).